The following is a 432-amino-acid chain: Homeobox protein Hox-D3 (432 aa).

Disordered stretches follow at residues 43 to 62, 68 to 197, 253 to 280, and 400 to 432; these read YSTP…LDTD, CSIQ…SKRV, QKAK…AGHV, and HHGP…LTHL. Over residues 97 to 106 the composition is skewed to gly residues; the sequence is NSQGGGGGSQ. The segment covering 116–131 has biased composition (pro residues); the sequence is PPQPPPPPPTLPPSSP. The segment covering 148–158 has biased composition (polar residues); that stretch reads NASSSSATISK. An Antp-type hexapeptide motif is present at residues 160–165; sequence IFPWMK. A DNA-binding region (homeobox) is located at residues 194–253; the sequence is SKRVRTAYTSAQLVELEKEFHFNRYLCRPRRVEMANLLNLTERQIKIWFQNRRMKYKKDQ.

It belongs to the Antp homeobox family.

It localises to the nucleus. In terms of biological role, sequence-specific transcription factor which is part of a developmental regulatory system that provides cells with specific positional identities on the anterior-posterior axis. The protein is Homeobox protein Hox-D3 (HOXD3) of Homo sapiens (Human).